The primary structure comprises 488 residues: Type II restriction enzyme HgaI (488 aa).

The enzyme catalyses Endonucleolytic cleavage of DNA to give specific double-stranded fragments with terminal 5'-phosphates.. Its function is as follows. An S subtype restriction enzyme that recognizes the double-stranded sequences 5'-GACGC-3' and 5'-GCGTC-3' and cleaves respectively 10 bases after G-1 and 10 bases before G'-1. This chain is Type II restriction enzyme HgaI (hgaIR), found in Avibacterium volantium (Pasteurella volantium).